A 504-amino-acid polypeptide reads, in one-letter code: 2,3-bisphosphoglycerate-independent phosphoglycerate mutase (504 aa).

Mn(2+)-binding residues include Asp11 and Ser61. Catalysis depends on Ser61, which acts as the Phosphoserine intermediate. Residues His122, 152-153 (RD), Arg183, Arg189, 255-258 (RNDR), and Lys329 contribute to the substrate site. The Mn(2+) site is built by Asp396, His400, Asp437, His438, and His455.

Belongs to the BPG-independent phosphoglycerate mutase family. Monomer. Mn(2+) serves as cofactor.

The enzyme catalyses (2R)-2-phosphoglycerate = (2R)-3-phosphoglycerate. The protein operates within carbohydrate degradation; glycolysis; pyruvate from D-glyceraldehyde 3-phosphate: step 3/5. Catalyzes the interconversion of 2-phosphoglycerate and 3-phosphoglycerate. The sequence is that of 2,3-bisphosphoglycerate-independent phosphoglycerate mutase from Bacteroides thetaiotaomicron (strain ATCC 29148 / DSM 2079 / JCM 5827 / CCUG 10774 / NCTC 10582 / VPI-5482 / E50).